A 218-amino-acid chain; its full sequence is Large ribosomal subunit protein uL3 (218 aa).

It belongs to the universal ribosomal protein uL3 family. As to quaternary structure, part of the 50S ribosomal subunit. Forms a cluster with proteins L14 and L19.

Functionally, one of the primary rRNA binding proteins, it binds directly near the 3'-end of the 23S rRNA, where it nucleates assembly of the 50S subunit. In Brachyspira pilosicoli (Serpulina pilosicoli), this protein is Large ribosomal subunit protein uL3.